Here is a 275-residue protein sequence, read N- to C-terminus: MELWFTEKQTKHFGITARINRTLHTEQTEFQKLDMVETEEFGNMLILDGMVMTTEKDEFVYHEMVAHVPLFTHPNPENVLVVGGGDGGVIREVLKHPSVKKATLVEIDGKVIEYSKKYLPSIAGALDHERVEVKVGDGFLHIAESENEYDVIMVDSTEPVGPAVNLFTKGFYAGISKALKEDGIFVAQTDNPWFTPELITNVVKDVKEIFPITRLYTANIPTYPSGLWTFTIGSKKYDPLEVSEDRFHDIETKYYTKELHKASFALPKFVGDLIK.

The PABS domain maps to 2-235 (ELWFTEKQTK…GLWTFTIGSK (234 aa)). Gln-31 is a binding site for S-methyl-5'-thioadenosine. Spermidine contacts are provided by His-62 and Asp-86. S-methyl-5'-thioadenosine-binding positions include Glu-106 and 137–138 (DG). The Proton acceptor role is filled by Asp-155. 155-158 (DSTE) lines the spermidine pocket. Residue Pro-162 coordinates S-methyl-5'-thioadenosine.

This sequence belongs to the spermidine/spermine synthase family. Homodimer or homotetramer.

The protein resides in the cytoplasm. It catalyses the reaction S-adenosyl 3-(methylsulfanyl)propylamine + putrescine = S-methyl-5'-thioadenosine + spermidine + H(+). The protein operates within amine and polyamine biosynthesis; spermidine biosynthesis; spermidine from putrescine: step 1/1. Its function is as follows. Catalyzes the irreversible transfer of a propylamine group from the amino donor S-adenosylmethioninamine (decarboxy-AdoMet) to putrescine (1,4-diaminobutane) to yield spermidine. The sequence is that of Polyamine aminopropyltransferase from Bacillus cytotoxicus (strain DSM 22905 / CIP 110041 / 391-98 / NVH 391-98).